The sequence spans 605 residues: Elongation factor 4 (605 aa).

The tr-type G domain occupies 11–193 (KNIRNFSIIA…TLVDVIPAPT (183 aa)). Residues 23–28 (DHGKST) and 140–143 (NKID) contribute to the GTP site.

Belongs to the TRAFAC class translation factor GTPase superfamily. Classic translation factor GTPase family. LepA subfamily.

The protein localises to the cell inner membrane. The catalysed reaction is GTP + H2O = GDP + phosphate + H(+). Required for accurate and efficient protein synthesis under certain stress conditions. May act as a fidelity factor of the translation reaction, by catalyzing a one-codon backward translocation of tRNAs on improperly translocated ribosomes. Back-translocation proceeds from a post-translocation (POST) complex to a pre-translocation (PRE) complex, thus giving elongation factor G a second chance to translocate the tRNAs correctly. Binds to ribosomes in a GTP-dependent manner. This Acinetobacter baumannii (strain SDF) protein is Elongation factor 4.